We begin with the raw amino-acid sequence, 443 residues long: Protein king tubby (443 aa).

2 disordered regions span residues 57–80 (TNGS…NNMR) and 98–191 (HELE…EGDV). Over residues 67–80 (VAMNTSRNHSNNMR) the composition is skewed to polar residues. A compositionally biased stretch (low complexity) spans 113-128 (QQQQSASHSANSTQSQ). Serine 136 is modified (phosphoserine). A compositionally biased stretch (gly residues) spans 177–186 (NGTGNGTGGE).

The protein belongs to the TUB family.

It is found in the cytoplasm. The protein localises to the nucleus. It localises to the cell projection. Its subcellular location is the cilium membrane. The protein resides in the rhabdomere. The polypeptide is Protein king tubby (Drosophila sechellia (Fruit fly)).